A 4513-amino-acid polypeptide reads, in one-letter code: Dynein-1-beta heavy chain, flagellar inner arm I1 complex (4513 aa).

The interval 1–1806 is stem; it reads MEPGDEGKGH…IVKQVLSVFY (1806 aa). 3 coiled-coil regions span residues 192-223, 1544-1577, and 1704-1727; these read KAAAKQKDLVQRLESTIIHWTRQVKELLNQQD, TAQGLLESFQDMNNKLERIQKSLDNYLENKRQQF, and THECEKALADADSARKNLKLLKKK. 4 AAA regions span residues 1807–2028, 2089–2350, 2458–2706, and 2808–3059; these read YGYE…PIAR, RAIE…VPEN, FKPA…IIQG, and DYAL…LKRR. Residues 1845–1852, 2127–2134, 2497–2504, and 2848–2855 each bind ATP; these read GPAGTGKT, GRTGSGKS, GNVGVGKT, and GVGGSGRK. Coiled coils occupy residues 3107-3193, 3301-3384, and 3499-3519; these read AAMK…LTKK, KRAK…SISE, and RLKVLNLQMSDMARQIENAIQ. A stalk region spans residues 3107–3384; it reads AAMKKVAEEK…RVRWEASISE (278 aa). AAA stretches follow at residues 3443-3674 and 3890-4109; these read LANP…EVNA and ATTY…LLKS.

The I1 inner arm complex (also known as the f dynein complex) is a two-headed isoform composed of two heavy chains (1-alpha and 1-beta), three intermediate chains and three light chains. I1 occupies a specific position proximal to the first radial spoke and repeats every 96 nm along the length of the axoneme.

The protein resides in the cell projection. It is found in the cilium. The protein localises to the flagellum. It localises to the cytoplasm. Its subcellular location is the cytoskeleton. The protein resides in the flagellum axoneme. Functionally, force generating protein of eukaryotic cilia and flagella. Produces force towards the minus ends of microtubules. Dynein has ATPase activity; the force-producing power stroke is thought to occur on release of ADP. Required for assembly of the I1 inner arm complex and its targeting to the appropriate axoneme location. Also required for phototaxis. This is Dynein-1-beta heavy chain, flagellar inner arm I1 complex (DHC10) from Chlamydomonas reinhardtii (Chlamydomonas smithii).